The primary structure comprises 135 residues: HTH-type transcriptional regulator DicA (135 aa).

Residues 12–66 (IRYRRKNLKHTQRSLAKALKISHVSVSQWERGDSEPTGKNLFALSKVLQCSPTWI) form the HTH cro/C1-type domain. Residues 23–42 (QRSLAKALKISHVSVSQWER) constitute a DNA-binding region (H-T-H motif).

In terms of biological role, this protein is a repressor of division inhibition gene dicB. The protein is HTH-type transcriptional regulator DicA (dicA) of Escherichia coli (strain K12).